Here is a 496-residue protein sequence, read N- to C-terminus: Bifunctional protein HldE (496 aa).

The segment at 1–335 (MIKHNPPSPE…GALFRSHGPT (335 aa)) is ribokinase. Position 211-214 (211-214 (NRKE)) interacts with ATP. The active site involves Asp280. The cytidylyltransferase stretch occupies residues 363-496 (FTNGCFDILH…IGKLRAGSTS (134 aa)).

In the N-terminal section; belongs to the carbohydrate kinase PfkB family. It in the C-terminal section; belongs to the cytidylyltransferase family. Homodimer.

The catalysed reaction is D-glycero-beta-D-manno-heptose 7-phosphate + ATP = D-glycero-beta-D-manno-heptose 1,7-bisphosphate + ADP + H(+). It catalyses the reaction D-glycero-beta-D-manno-heptose 1-phosphate + ATP + H(+) = ADP-D-glycero-beta-D-manno-heptose + diphosphate. It participates in nucleotide-sugar biosynthesis; ADP-L-glycero-beta-D-manno-heptose biosynthesis; ADP-L-glycero-beta-D-manno-heptose from D-glycero-beta-D-manno-heptose 7-phosphate: step 1/4. The protein operates within nucleotide-sugar biosynthesis; ADP-L-glycero-beta-D-manno-heptose biosynthesis; ADP-L-glycero-beta-D-manno-heptose from D-glycero-beta-D-manno-heptose 7-phosphate: step 3/4. Functionally, catalyzes the phosphorylation of D-glycero-D-manno-heptose 7-phosphate at the C-1 position to selectively form D-glycero-beta-D-manno-heptose-1,7-bisphosphate. In terms of biological role, catalyzes the ADP transfer from ATP to D-glycero-beta-D-manno-heptose 1-phosphate, yielding ADP-D-glycero-beta-D-manno-heptose. The sequence is that of Bifunctional protein HldE from Mesorhizobium japonicum (strain LMG 29417 / CECT 9101 / MAFF 303099) (Mesorhizobium loti (strain MAFF 303099)).